Reading from the N-terminus, the 216-residue chain is Phosphoenolpyruvate guanylyltransferase (216 aa).

Residues Thr-143, Gly-159, and Ser-162 each contribute to the phosphoenolpyruvate site.

It belongs to the CofC family.

It carries out the reaction phosphoenolpyruvate + GTP + H(+) = enolpyruvoyl-2-diphospho-5'-guanosine + diphosphate. It functions in the pathway cofactor biosynthesis; coenzyme F420 biosynthesis. Guanylyltransferase that catalyzes the activation of phosphoenolpyruvate (PEP) as enolpyruvoyl-2-diphospho-5'-guanosine, via the condensation of PEP with GTP. It is involved in the biosynthesis of coenzyme F420, a hydride carrier cofactor. This is Phosphoenolpyruvate guanylyltransferase from Streptomyces scabiei (strain 87.22).